Here is a 60-residue protein sequence, read N- to C-terminus: Protein P7 (60 aa).

The chain crosses the membrane as a helical span at residues 28–48; it reads FIGVTLIGMFISYYLYALISI.

It is found in the host membrane. This Vitis vinifera (Grape) protein is Protein P7.